Here is a 213-residue protein sequence, read N- to C-terminus: Octanoyltransferase (213 aa).

A BPL/LPL catalytic domain is found at 35–213; the sequence is DERGDAVLLL…ERHLPTLIEP (179 aa). Residues 73 to 80, 145 to 147, and 158 to 160 each bind substrate; these read RGGKITWH, AIG, and GFS. Residue Cys176 is the Acyl-thioester intermediate of the active site.

It belongs to the LipB family.

The protein localises to the cytoplasm. The catalysed reaction is octanoyl-[ACP] + L-lysyl-[protein] = N(6)-octanoyl-L-lysyl-[protein] + holo-[ACP] + H(+). It participates in protein modification; protein lipoylation via endogenous pathway; protein N(6)-(lipoyl)lysine from octanoyl-[acyl-carrier-protein]: step 1/2. In terms of biological role, catalyzes the transfer of endogenously produced octanoic acid from octanoyl-acyl-carrier-protein onto the lipoyl domains of lipoate-dependent enzymes. Lipoyl-ACP can also act as a substrate although octanoyl-ACP is likely to be the physiological substrate. This Salinispora tropica (strain ATCC BAA-916 / DSM 44818 / JCM 13857 / NBRC 105044 / CNB-440) protein is Octanoyltransferase.